Consider the following 308-residue polypeptide: MFDPETLRTFISVAETGSFSKAAERLCKTTATTSYRIKLLEENTGVGLFFRTTRSVSLTAAGSHLLSQAKDWLAWLDSMPDELRQVNDGVERQVNIVVNNLLYSPQAVASLLSWLNARYPFTQFHFSRQIYMGVWDSLLYEGFSLAIGVTGTEPLANTFMLDPLGSVQWRFVMSADHPLAHVSGPLTEAQLRRFPAINIEDSARTLTKRVAWRLPGQKEIIVPDMETKIAAHLAGVGIGFVPQPLCQTLIDKNELVSCTIPTMRPPSPLSLAWHKFGGGKAVEDIVKLFTQRQPEIAGFLSIFNTVRC.

Residues 2–59 (FDPETLRTFISVAETGSFSKAAERLCKTTATTSYRIKLLEENTGVGLFFRTTRSVSLT) form the HTH lysR-type domain. Positions 19 to 38 (FSKAAERLCKTTATTSYRIK) form a DNA-binding region, H-T-H motif.

It belongs to the LysR transcriptional regulatory family.

Its function is as follows. Positive regulator essential for the expression of allD operon. Binds to the allD promoter. In Salmonella typhi, this protein is HTH-type transcriptional activator AllS (allS).